Consider the following 394-residue polypeptide: MSVQATREDKFSFGLWTVGWQARDAFGDATRTALDPVEAVHKLAEIGAYGITFHDDDLVPFGSDAQTRDGIIAGFKKALDETGLIVPMVTTNLFTHPVFKDGGFTSNDRSVRRYAIRKVLRQMDLGAELGAKTLVLWGGREGAEYDSAKDVSAALDRYREALNLLAQYSEDRGYGLRFAIEPKPNEPRGDILLPTAGHAIAFVQELERPELFGINPETGHEQMSNLNFTQGIAQALWHKKLFHIDLNGQHGPKFDQDLVFGHGDLLNAFSLVDLLENGPDGAPAYDGPRHFDYKPSRTEDYDGVWESAKANIRMYLLLKERAKAFRADPEVQEALAASKVAELKTPTLNPGEGYAELLADRSAFEDYDADAVGAKGFGFVKLNQLAIEHLLGAR.

Residues histidine 54 and aspartate 57 contribute to the active site. Glutamate 181, glutamate 217, histidine 220, aspartate 245, aspartate 255, aspartate 257, and aspartate 292 together coordinate Mg(2+).

The protein belongs to the xylose isomerase family. Homotetramer. It depends on Mg(2+) as a cofactor.

It is found in the cytoplasm. The enzyme catalyses alpha-D-xylose = alpha-D-xylulofuranose. This is Xylose isomerase (xylA) from Actinoplanes missouriensis (strain ATCC 14538 / DSM 43046 / CBS 188.64 / JCM 3121 / NBRC 102363 / NCIMB 12654 / NRRL B-3342 / UNCC 431).